The chain runs to 495 residues: MNFHHLAYWQDKALSLAIENRLFINGEYTAAAENETFETVDPVTQAPLAKIARGKSVDIDRAMSAARGVFERGDWSLSSPAKRKAVLNKLADLMEAHAEELALLETLDTGKPIRHSLRDDIPGAARAIRWYAEAIDKVYGEVATTSSHELAMIVREPVGVIAAIVPWNFPLLLTCWKLGPALAAGNSVILKPSEKSPLSAIRLAGLAKEAGLPDGVLNVVTGFGHEAGQALSRHNDIDAIAFTGSTRTGKQLLKDAGDSNMKRVWLEAGGKSANIVFADCPDLQQAASATAAGIFYNQGQVCIAGTRLLLEESIADEFLALLKQQAQNWQPGHPLDPATTMGTLIDCAHADSVHSFIREGESKGQLLLDGRNAGLAAAIGPTIFVDVDPNASLSREEIFGPVLVVTRFTSEEQALQLANDSQYGLGAAVWTRDLSRAHRMSRRLKAGSVFVNNYNDGDMTVPFGGYKQSGNGRDKSLHALEKFTELKTIWISLEA.

244–249 is a binding site for NAD(+); it reads GSTRTG. Catalysis depends on residues Glu267 and Cys302.

Belongs to the aldehyde dehydrogenase family.

It carries out the reaction an aldehyde + NADP(+) + H2O = a carboxylate + NADPH + 2 H(+). It catalyses the reaction an aldehyde + NAD(+) + H2O = a carboxylate + NADH + 2 H(+). The catalysed reaction is 4-(gamma-L-glutamylamino)butanal + NADP(+) + H2O = 4-(gamma-L-glutamylamino)butanoate + NADPH + 2 H(+). The enzyme catalyses 4-(gamma-L-glutamylamino)butanal + NAD(+) + H2O = 4-(gamma-L-glutamylamino)butanoate + NADH + 2 H(+). The protein operates within amine and polyamine degradation; putrescine degradation; 4-aminobutanoate from putrescine: step 3/4. With respect to regulation, lithium ions exhibits the highest inhibition (97%). To a lesser extent (5-20%), potassium, sodium, and ammonium ions also inhibit PuuC activity. Transition metals, such as copper and zinc ions inhibit PuuC activity by more than 90%. The presence of heavy metals (mercury, silver) or sodium hydrogensulfite in the reaction mixture completely inactivate PuuC; in contrast, disulfide reductants such as DTT and 2-mercaptoethanol significantly increase its activity by 75% and 27%, respectively. Its function is as follows. Catalyzes the oxidation of 3-hydroxypropionaldehyde (3-HPA) to 3-hydroxypropionic acid (3-HP). It acts preferentially with NAD but can also use NADP. 3-HPA appears to be the most suitable substrate for PuuC followed by isovaleraldehyde, propionaldehyde, butyraldehyde, and valeraldehyde. It might play a role in propionate and/or acetic acid metabolisms. Also involved in the breakdown of putrescine through the oxidation of gamma-Glu-gamma-aminobutyraldehyde to gamma-Glu-gamma-aminobutyrate (gamma-Glu-GABA). This chain is NADP/NAD-dependent aldehyde dehydrogenase PuuC, found in Escherichia coli (strain K12).